Reading from the N-terminus, the 126-residue chain is S-adenosylmethionine decarboxylase proenzyme (126 aa).

Residue Ser-63 is the Schiff-base intermediate with substrate; via pyruvic acid of the active site. Pyruvic acid (Ser); by autocatalysis is present on Ser-63. The active-site Proton acceptor; for processing activity is His-68. Cys-83 serves as the catalytic Proton donor; for catalytic activity.

The protein belongs to the prokaryotic AdoMetDC family. Type 1 subfamily. Heterotetramer of two alpha and two beta chains arranged as a dimer of alpha/beta heterodimers. Pyruvate serves as cofactor. Is synthesized initially as an inactive proenzyme. Formation of the active enzyme involves a self-maturation process in which the active site pyruvoyl group is generated from an internal serine residue via an autocatalytic post-translational modification. Two non-identical subunits are generated from the proenzyme in this reaction, and the pyruvate is formed at the N-terminus of the alpha chain, which is derived from the carboxyl end of the proenzyme. The post-translation cleavage follows an unusual pathway, termed non-hydrolytic serinolysis, in which the side chain hydroxyl group of the serine supplies its oxygen atom to form the C-terminus of the beta chain, while the remainder of the serine residue undergoes an oxidative deamination to produce ammonia and the pyruvoyl group blocking the N-terminus of the alpha chain.

It catalyses the reaction S-adenosyl-L-methionine + H(+) = S-adenosyl 3-(methylsulfanyl)propylamine + CO2. The protein operates within amine and polyamine biosynthesis; S-adenosylmethioninamine biosynthesis; S-adenosylmethioninamine from S-adenosyl-L-methionine: step 1/1. Catalyzes the decarboxylation of S-adenosylmethionine to S-adenosylmethioninamine (dcAdoMet), the propylamine donor required for the synthesis of the polyamines spermine and spermidine from the diamine putrescine. The sequence is that of S-adenosylmethionine decarboxylase proenzyme from Oceanobacillus iheyensis (strain DSM 14371 / CIP 107618 / JCM 11309 / KCTC 3954 / HTE831).